A 409-amino-acid polypeptide reads, in one-letter code: Elongation factor Tu (409 aa).

Residues 10 to 214 enclose the tr-type G domain; sequence KPHVNVGTIG…AVDSYIPTPE (205 aa). The G1 stretch occupies residues 19–26; that stretch reads GHVDHGKT. 19–26 contacts GTP; the sequence is GHVDHGKT. Thr-26 lines the Mg(2+) pocket. Residues 60–64 form a G2 region; the sequence is GITIN. The tract at residues 81-84 is G3; that stretch reads DCPG. GTP-binding positions include 81–85 and 136–139; these read DCPGH and NKAD. Positions 136–139 are G4; sequence NKAD. The G5 stretch occupies residues 174–176; sequence SAL.

The protein belongs to the TRAFAC class translation factor GTPase superfamily. Classic translation factor GTPase family. EF-Tu/EF-1A subfamily. In terms of assembly, monomer.

It is found in the cytoplasm. It catalyses the reaction GTP + H2O = GDP + phosphate + H(+). In terms of biological role, GTP hydrolase that promotes the GTP-dependent binding of aminoacyl-tRNA to the A-site of ribosomes during protein biosynthesis. This chain is Elongation factor Tu, found in Synechococcus sp. (strain JA-2-3B'a(2-13)) (Cyanobacteria bacterium Yellowstone B-Prime).